A 163-amino-acid chain; its full sequence is Small ribosomal subunit protein bS6 (163 aa).

Residues 97-163 (EEGQTAMLTN…GRNEGEGDRA (67 aa)) form a disordered region. Positions 122-163 (RGPRRDFGDRGPRRDFGDRGPRRDGDGPRAEGGRNEGEGDRA) are enriched in basic and acidic residues.

Belongs to the bacterial ribosomal protein bS6 family.

Binds together with bS18 to 16S ribosomal RNA. This chain is Small ribosomal subunit protein bS6, found in Rhodospirillum centenum (strain ATCC 51521 / SW).